The chain runs to 508 residues: Maturase K (508 aa).

The protein belongs to the intron maturase 2 family. MatK subfamily.

It localises to the plastid. Its subcellular location is the chloroplast. In terms of biological role, usually encoded in the trnK tRNA gene intron. Probably assists in splicing its own and other chloroplast group II introns. In Marathrum schiedeanum, this protein is Maturase K.